The following is an 874-amino-acid chain: Alanine--tRNA ligase (874 aa).

His-562, His-566, Cys-664, and His-668 together coordinate Zn(2+).

It belongs to the class-II aminoacyl-tRNA synthetase family. Zn(2+) serves as cofactor.

Its subcellular location is the cytoplasm. The enzyme catalyses tRNA(Ala) + L-alanine + ATP = L-alanyl-tRNA(Ala) + AMP + diphosphate. Functionally, catalyzes the attachment of alanine to tRNA(Ala) in a two-step reaction: alanine is first activated by ATP to form Ala-AMP and then transferred to the acceptor end of tRNA(Ala). Also edits incorrectly charged Ser-tRNA(Ala) and Gly-tRNA(Ala) via its editing domain. This Shewanella putrefaciens (strain CN-32 / ATCC BAA-453) protein is Alanine--tRNA ligase.